The chain runs to 427 residues: Enolase (427 aa).

Gln-163 provides a ligand contact to (2R)-2-phosphoglycerate. Glu-205 (proton donor) is an active-site residue. 3 residues coordinate Mg(2+): Asp-242, Glu-285, and Asp-312. Positions 337, 366, 367, and 388 each coordinate (2R)-2-phosphoglycerate. Lys-337 serves as the catalytic Proton acceptor.

The protein belongs to the enolase family. It depends on Mg(2+) as a cofactor.

The protein resides in the cytoplasm. It localises to the secreted. Its subcellular location is the cell surface. The catalysed reaction is (2R)-2-phosphoglycerate = phosphoenolpyruvate + H2O. Its pathway is carbohydrate degradation; glycolysis; pyruvate from D-glyceraldehyde 3-phosphate: step 4/5. Functionally, catalyzes the reversible conversion of 2-phosphoglycerate (2-PG) into phosphoenolpyruvate (PEP). It is essential for the degradation of carbohydrates via glycolysis. The polypeptide is Enolase (Paraburkholderia xenovorans (strain LB400)).